The sequence spans 407 residues: MPRVDDDAVGVPLTGNGRGAVMTEAYVIDAVRTAVGKRGGALAGIHPVDLGALAWRGLLDRTDIDPAAVDDVIAGCVDAIGGQAGNIARLSWLAAGYPEEVPGVTVDRQCGSSQQAISFGAQAIMSGTADVIVAGGVQNMSQIPISSAMTVGEQFGFTSPTNESKQWLHRYGDQEISQFRGSELIAEKWNLSREEMERYSLTSHERAFAAIRAGHFENEIITVETESGPFRVDEGPRESSLEKMAGLQPLVEGGRLTAAMASQISDGASAVLLASERAVKDHGLRPRARIHHISARAADPVFMLTGPIPATRYALDKTGLAIDDIDTVEINEAFAPVVMAWLKEIKADPAKVNPNGGAIALGHPLGATGAKLFTTMLGELERIGGRYGLQTMCEGGGTANVTIIERL.

The active-site Acyl-thioester intermediate is the Cys-110. Residues Gln-178, 237–239 (RES), and Ser-262 contribute to the CoA site. Active-site proton acceptor residues include His-363 and Cys-393. Gly-395 contributes to the substrate binding site.

The protein belongs to the thiolase-like superfamily. Thiolase family.

The catalysed reaction is an acyl-CoA + acetyl-CoA = a 3-oxoacyl-CoA + CoA. It carries out the reaction 6-methyl-3,7-dioxodecanedioyl-CoA + CoA = 4-methyl-5-oxo-octanedioyl-CoA + acetyl-CoA. It participates in steroid metabolism; cholesterol degradation. Functionally, may be involved in the final steps of cholesterol and steroid degradation. Catalyzes the formation of 4-methyl-5-oxo-octanedioyl-CoA (MOODA-CoA) and acetyl-CoA from 6-methyl-3,7-dioxodecanedioyl-CoA (MeDODA-CoA) and coenzyme A. The polypeptide is Steroid 3-ketoacyl-CoA thiolase FadA6 (Mycobacterium tuberculosis (strain ATCC 25618 / H37Rv)).